A 745-amino-acid polypeptide reads, in one-letter code: Cellulose synthase 1 catalytic subunit [UDP-forming] (745 aa).

The next 3 helical transmembrane spans lie at 29 to 49 (YVVGALGLCALLAATMVTLSL), 106 to 126 (GILGVTLLLAELYALYMLFLS), and 153 to 173 (IFIPTYDEALSIVRLTVLGAL). The catalytic subdomain A stretch occupies residues 147 to 240 (EWPTVDIFIP…HILILDCDHI (94 aa)). The active site involves Asp189. Positions 236 and 238 each coordinate substrate. Positions 317–377 (KAIEEIGGFA…GQRMRWARGM (61 aa)) are catalytic subdomain B. Residue Asp333 is part of the active site. Helical transmembrane passes span 407–427 (FFFAIPRVIFLASPLAFLFFS), 430–450 (IIAASPLAVGVYAIPHMFHSI), 468–488 (VYETVMALFLVRVTIVTMLFP), 515–535 (NIIFAIIMALGLLRGLYALIF), 547–567 (ALNCIWSVISLIILMAVISVG), and 649–669 (AVFTWSISNIQVEAAVVRFVF). A PilZ domain is found at 572 to 670 (QLRQSHRIEA…EAAVVRFVFG (99 aa)). Over residues 708 to 717 (IAHSRPKKKP) the composition is skewed to basic residues. The interval 708–745 (IAHSRPKKKPIALPVERREPTTSQGGQKQEGKISRAAS) is disordered. Over residues 736–745 (QEGKISRAAS) the composition is skewed to basic and acidic residues.

This sequence belongs to the glycosyltransferase 2 family. Mg(2+) is required as a cofactor.

Its subcellular location is the cell inner membrane. The catalysed reaction is [(1-&gt;4)-beta-D-glucosyl](n) + UDP-alpha-D-glucose = [(1-&gt;4)-beta-D-glucosyl](n+1) + UDP + H(+). Its pathway is glycan metabolism; bacterial cellulose biosynthesis. Activated by bis-(3'-5') cyclic diguanylic acid (c-di-GMP). In terms of biological role, catalytic subunit of cellulose synthase. It polymerizes uridine 5'-diphosphate glucose to cellulose. The thick cellulosic mats generated by this enzyme probably provide a specialized protective environment to the bacterium. This Komagataeibacter xylinus (Gluconacetobacter xylinus) protein is Cellulose synthase 1 catalytic subunit [UDP-forming] (bcsAI).